The chain runs to 217 residues: MMSLGLVGRKVGMTRIFTAEGDSIPVTVLDVSDNRVTQIKTVETDGYTAVQVAFGSRRASRVTKPLAGHLAKAGVEAGEILKEFRIDAAKAAELSNGAVVGVDLFEVGQKVDVQGVSIGKGYAGTIKRYNFSSGRATHGNSRSHNVPGSIGMAQDPGRVFPGKRMTGHMGDETVTVQNLEIARIDAERKLLLVKGAIPGAKGGKVFVTPAVKTKGAK.

Residues 134–146 (GRATHGNSRSHNV) show a composition bias toward polar residues. A disordered region spans residues 134 to 154 (GRATHGNSRSHNVPGSIGMAQ). Residue glutamine 154 is modified to N5-methylglutamine.

It belongs to the universal ribosomal protein uL3 family. Part of the 50S ribosomal subunit. Forms a cluster with proteins L14 and L19. Methylated by PrmB.

One of the primary rRNA binding proteins, it binds directly near the 3'-end of the 23S rRNA, where it nucleates assembly of the 50S subunit. The sequence is that of Large ribosomal subunit protein uL3 from Burkholderia lata (strain ATCC 17760 / DSM 23089 / LMG 22485 / NCIMB 9086 / R18194 / 383).